The following is a 300-amino-acid chain: tRNA dimethylallyltransferase (300 aa).

9–16 serves as a coordination point for ATP; the sequence is GPTASGKS. 11-16 contacts substrate; sequence TASGKS. Residues 34–37 form an interaction with substrate tRNA region; the sequence is DSKQ.

Belongs to the IPP transferase family. In terms of assembly, monomer. It depends on Mg(2+) as a cofactor.

The catalysed reaction is adenosine(37) in tRNA + dimethylallyl diphosphate = N(6)-dimethylallyladenosine(37) in tRNA + diphosphate. Functionally, catalyzes the transfer of a dimethylallyl group onto the adenine at position 37 in tRNAs that read codons beginning with uridine, leading to the formation of N6-(dimethylallyl)adenosine (i(6)A). The sequence is that of tRNA dimethylallyltransferase from Ehrlichia ruminantium (strain Welgevonden).